We begin with the raw amino-acid sequence, 323 residues long: Ribosomal RNA small subunit methyltransferase H (323 aa).

Residues 44-46 (AGH), Asp-64, Tyr-91, Asp-112, and Gln-119 contribute to the S-adenosyl-L-methionine site.

The protein belongs to the methyltransferase superfamily. RsmH family.

Its subcellular location is the cytoplasm. It carries out the reaction cytidine(1402) in 16S rRNA + S-adenosyl-L-methionine = N(4)-methylcytidine(1402) in 16S rRNA + S-adenosyl-L-homocysteine + H(+). Its function is as follows. Specifically methylates the N4 position of cytidine in position 1402 (C1402) of 16S rRNA. In Nitratidesulfovibrio vulgaris (strain ATCC 29579 / DSM 644 / CCUG 34227 / NCIMB 8303 / VKM B-1760 / Hildenborough) (Desulfovibrio vulgaris), this protein is Ribosomal RNA small subunit methyltransferase H.